A 226-amino-acid chain; its full sequence is Cytidylate kinase (226 aa).

10-18 (GPASSGKST) contributes to the ATP binding site.

Belongs to the cytidylate kinase family. Type 1 subfamily.

It localises to the cytoplasm. It carries out the reaction CMP + ATP = CDP + ADP. The enzyme catalyses dCMP + ATP = dCDP + ADP. This is Cytidylate kinase from Streptococcus pyogenes serotype M28 (strain MGAS6180).